Consider the following 88-residue polypeptide: Large ribosomal subunit protein bL27 (88 aa).

Positions 1–21 are disordered; sequence MAHKKGVGSSRNGRDSQPKML.

Belongs to the bacterial ribosomal protein bL27 family.

The protein is Large ribosomal subunit protein bL27 of Pelotomaculum thermopropionicum (strain DSM 13744 / JCM 10971 / SI).